The chain runs to 394 residues: D-aspartate oxidase (394 aa).

Positions 19, 57, 58, and 62 each coordinate FAD. Residues 190–210 traverse the membrane as a helical segment; that stretch reads LIGHEPTAGVIVCVGLGALVL. The N-linked (GlcNAc...) asparagine glycan is linked to Asn214. Positions 342, 373, and 375 each coordinate FAD.

This sequence belongs to the DAMOX/DASOX family. Requires FAD as cofactor.

The protein resides in the membrane. The enzyme catalyses D-aspartate + O2 + H2O = oxaloacetate + H2O2 + NH4(+). Functionally, selectively catalyzes the oxidative deamination of acidic amino acids. Protects the organism from the toxicity of D-amino acids. Enables the organism to utilize D-amino acids as a source of nutrients. Enables the organism to utilize D-aspartate and D-asparagine as a source of nitrogen. May play a role in its interaction with the host. This is D-aspartate oxidase from Cryptococcus neoformans var. grubii serotype A (strain H99 / ATCC 208821 / CBS 10515 / FGSC 9487) (Filobasidiella neoformans var. grubii).